The following is a 463-amino-acid chain: RuvB-like 2 (463 aa).

Gly77–Thr84 provides a ligand contact to ATP.

The protein belongs to the RuvB family. Forms homohexameric rings. Can form a dodecamer with ruvbl1 made of two stacked hexameric rings. Component of the chromatin-remodeling Ino80 complex. Component of some MLL1/MLL complex.

The protein localises to the nucleus. It localises to the dynein axonemal particle. It carries out the reaction ATP + H2O = ADP + phosphate + H(+). Has double-stranded DNA-stimulated ATPase activity. Has ATP-dependent DNA helicase (5' to 3') activity suggesting a role in nuclear processes such as recombination and transcription. Represses gene activation mediated by beta-catenin. Proposed core component of the chromatin remodeling Ino80 complex which exhibits DNA- and nucleosome-activated ATPase activity and catalyzes ATP-dependent nucleosome sliding. Involved in the endoplasmic reticulum (ER)-associated degradation (ERAD) pathway where it negatively regulates expression of ER stress response genes. May act as a regulator of embryonic heart growth. The chain is RuvB-like 2 (ruvbl2) from Danio rerio (Zebrafish).